Reading from the N-terminus, the 130-residue chain is MSMQDPISDMLTRVRNGQAANKVAVKMPSSKLKVAIAALLKAEGYIVDFAVDSEAKPELEVTLKYFQAKPVIEQIKRVSRPGLRVYKNKDSLPTVMGGLGIAVVSTSKGLMSDRAARKAGLGGEIICYVA.

Belongs to the universal ribosomal protein uS8 family. In terms of assembly, part of the 30S ribosomal subunit. Contacts proteins S5 and S12.

Functionally, one of the primary rRNA binding proteins, it binds directly to 16S rRNA central domain where it helps coordinate assembly of the platform of the 30S subunit. The protein is Small ribosomal subunit protein uS8 of Vibrio atlanticus (strain LGP32) (Vibrio splendidus (strain Mel32)).